The following is a 79-amino-acid chain: M-myrmicitoxin(01)-Tb1a (79 aa).

The first 26 residues, 1-26 (MKLSFLSLVLAIILVMALMYTPHAEA), serve as a signal peptide directing secretion. Residues 27-56 (KAWADADADATAAADADADAVADALADAVA) constitute a propeptide that is removed on maturation. Val-76 bears the Valine amide mark.

The protein belongs to the formicidae venom precursor-01 superfamily. Post-translationally, the C-terminal amidation is important for antimicrobial activity, since a non-amidated synthetic peptide shows a reduced antimicrobial activity (2-20-fold depending on the strain tested). The amidation may play a positive role in the peptide conformation, since amidated peptide shows an increase of about 5% of helical content. Expressed by the venom gland.

The protein localises to the secreted. It localises to the target cell membrane. Functionally, antimicrobial peptide that shows antimicrobial activities against all microorganisms tested with minimal inhibitory concentrations (MICs) values ranging from 0.45 to 97.5 umol/L. This peptide kills the microorganisms by permeabilizating the membranes. It shows a very weak hemolytic activity (HC(50)=325 umol/L) and weak cytotoxicity against human lymphocytes (LC(50)=67.8 umol/L). Gram-negative bacteria tested are E.coli (MIC=24.4 umol/L), C.sakazakii (MIC=5.8 umol/L), P.aeruginosa (MIC=8.7-12.2 umol/L), S.enterica (MIC=5.4 umol/L), and H.pylori (MIC=0.99-3.9 umol/L). Gram-positive bacteria tested are E.hirae (MIC=12.2 umol/L), S.aureus (MIC=3.0-6.4 umol/L), methicillin-resistant S.aureus (MRSA) (MIC=8.7 umol/L), S.xylosus (MIC=0.45-1.3 umol/L), and B.subtilis (MIC=24.4 umol/L). Fungi tested are A.niger (MIC=0.75 umol/L), C.albicans (MIC=17.3 umol/L), G.candidum (MIC=97.5 umol/L), and S.cerevisiae (MIC=6.1 umol/L). Finally the parasite tested is L.infantum (MIC=1.5 umol/L). This chain is M-myrmicitoxin(01)-Tb1a, found in Tetramorium bicarinatum (Tramp ant).